Reading from the N-terminus, the 251-residue chain is Probable transcriptional regulatory protein Francci3_1368 (251 aa).

It belongs to the TACO1 family.

The protein localises to the cytoplasm. The polypeptide is Probable transcriptional regulatory protein Francci3_1368 (Frankia casuarinae (strain DSM 45818 / CECT 9043 / HFP020203 / CcI3)).